We begin with the raw amino-acid sequence, 215 residues long: UPF0502 protein YceH (215 aa).

Position 80 is an N6-acetyllysine (K80).

It belongs to the UPF0502 family.

The polypeptide is UPF0502 protein YceH (Shigella boydii serotype 4 (strain Sb227)).